A 214-amino-acid chain; its full sequence is Thymidylate kinase (214 aa).

7 to 14 provides a ligand contact to ATP; sequence GIDGAGKS.

It belongs to the thymidylate kinase family.

The catalysed reaction is dTMP + ATP = dTDP + ADP. Phosphorylation of dTMP to form dTDP in both de novo and salvage pathways of dTTP synthesis. This Chlorobaculum tepidum (strain ATCC 49652 / DSM 12025 / NBRC 103806 / TLS) (Chlorobium tepidum) protein is Thymidylate kinase.